A 541-amino-acid polypeptide reads, in one-letter code: Arginine--tRNA ligase (541 aa).

A 'HIGH' region motif is present at residues 119–129 (ANPTGPLHIGH).

Belongs to the class-I aminoacyl-tRNA synthetase family. In terms of assembly, monomer.

It localises to the cytoplasm. The catalysed reaction is tRNA(Arg) + L-arginine + ATP = L-arginyl-tRNA(Arg) + AMP + diphosphate. This Helicobacter pylori (strain J99 / ATCC 700824) (Campylobacter pylori J99) protein is Arginine--tRNA ligase (argS).